The chain runs to 632 residues: tRNA uridine 5-carboxymethylaminomethyl modification enzyme MnmG (632 aa).

FAD contacts are provided by residues 15–20, I127, and S182; that span reads GAGHAG. 276-290 serves as a coordination point for NAD(+); it reads GPRYCPSIEDKIVRF. Q373 contributes to the FAD binding site.

It belongs to the MnmG family. Homodimer. Heterotetramer of two MnmE and two MnmG subunits. It depends on FAD as a cofactor.

The protein localises to the cytoplasm. Its function is as follows. NAD-binding protein involved in the addition of a carboxymethylaminomethyl (cmnm) group at the wobble position (U34) of certain tRNAs, forming tRNA-cmnm(5)s(2)U34. The protein is tRNA uridine 5-carboxymethylaminomethyl modification enzyme MnmG of Streptococcus pyogenes serotype M4 (strain MGAS10750).